Here is a 37-residue protein sequence, read N- to C-terminus: Large ribosomal subunit protein bL36 (37 aa).

It belongs to the bacterial ribosomal protein bL36 family.

The protein is Large ribosomal subunit protein bL36 of Leptospira interrogans serogroup Icterohaemorrhagiae serovar Lai (strain 56601).